We begin with the raw amino-acid sequence, 145 residues long: Natriuretic peptides A (145 aa).

The signal sequence occupies residues methionine 1–glycine 23. Positions glycine 24–arginine 117 are excised as a propeptide. Residues cysteine 125 and cysteine 141 are joined by a disulfide bond.

Belongs to the natriuretic peptide family. In terms of processing, cleaved upon secretion to produce the functional hormone.

It is found in the secreted. In terms of biological role, hormone playing a key role in cardiovascular homeostasis through regulation of natriuresis, diuresis, and vasodilation. Has a cGMP-stimulating activity. The chain is Natriuretic peptides A from Aquarana catesbeiana (American bullfrog).